The sequence spans 266 residues: Phosphate import ATP-binding protein PstB 1 (266 aa).

In terms of domain architecture, ABC transporter spans 21 to 261 (ISTQDLSVFY…PKGEITEDYI (241 aa)). 54–61 (GGSGSGKS) serves as a coordination point for ATP.

It belongs to the ABC transporter superfamily. Phosphate importer (TC 3.A.1.7) family. In terms of assembly, the complex is composed of two ATP-binding proteins (PstB), two transmembrane proteins (PstC and PstA) and a solute-binding protein (PstS).

The protein resides in the cell membrane. The catalysed reaction is phosphate(out) + ATP + H2O = ADP + 2 phosphate(in) + H(+). Part of the ABC transporter complex PstSACB involved in phosphate import. Responsible for energy coupling to the transport system. The protein is Phosphate import ATP-binding protein PstB 1 of Lactobacillus johnsonii (strain CNCM I-12250 / La1 / NCC 533).